A 422-amino-acid polypeptide reads, in one-letter code: Probable zinc-type alcohol dehydrogenase-like protein L498 (422 aa).

Cys108, His129, Cys160, Cys163, Cys166, Cys174, and Cys231 together coordinate Zn(2+).

It depends on Zn(2+) as a cofactor.

The protein resides in the host cytoplasm. Its subcellular location is the virion. This Acanthamoeba polyphaga (Amoeba) protein is Probable zinc-type alcohol dehydrogenase-like protein L498.